We begin with the raw amino-acid sequence, 313 residues long: uncharacterized protein (313 aa).

This is an uncharacterized protein from Bacillus subtilis (strain 168).